The sequence spans 1049 residues: Carbamoyl phosphate synthase large chain (1049 aa).

The carboxyphosphate synthetic domain stretch occupies residues 1 to 399; the sequence is MRESVRKVLV…SLQKAVRMLD (399 aa). Positions 127, 167, 173, 174, 206, 208, 213, 239, 240, 241, 282, and 296 each coordinate ATP. Residues 131 to 325 enclose the ATP-grasp 1 domain; sequence RETMINVGLP…LAYVSAKLAL (195 aa). Positions 282, 296, and 298 each coordinate Mg(2+). 3 residues coordinate Mn(2+): glutamine 282, glutamate 296, and asparagine 298. An oligomerization domain region spans residues 400–548; it reads IGEPGVVGGK…LTYNGTEDDI (149 aa). Residues 549 to 930 are carbamoyl phosphate synthetic domain; sequence EFSEAGNKLL…LKSWLSSSPN (382 aa). One can recognise an ATP-grasp 2 domain in the interval 674–864; the sequence is SKLLDKLGIK…IISLALDGIL (191 aa). The ATP site is built by arginine 710, lysine 749, leucine 751, glutamate 756, glycine 780, valine 781, histidine 782, serine 783, glutamine 823, and glutamate 835. Mg(2+)-binding residues include glutamine 823, glutamate 835, and asparagine 837. Positions 823, 835, and 837 each coordinate Mn(2+). Positions 930–1049 constitute an MGS-like domain; that stretch reads NKIPNKEGIA…YEISEYGAGI (120 aa). An allosteric domain region spans residues 931 to 1049; the sequence is KIPNKEGIAL…YEISEYGAGI (119 aa).

It belongs to the CarB family. In terms of assembly, composed of two chains; the small (or glutamine) chain promotes the hydrolysis of glutamine to ammonia, which is used by the large (or ammonia) chain to synthesize carbamoyl phosphate. Tetramer of heterodimers (alpha,beta)4. It depends on Mg(2+) as a cofactor. Requires Mn(2+) as cofactor.

It catalyses the reaction hydrogencarbonate + L-glutamine + 2 ATP + H2O = carbamoyl phosphate + L-glutamate + 2 ADP + phosphate + 2 H(+). The catalysed reaction is hydrogencarbonate + NH4(+) + 2 ATP = carbamoyl phosphate + 2 ADP + phosphate + 2 H(+). It participates in amino-acid biosynthesis; L-arginine biosynthesis; carbamoyl phosphate from bicarbonate: step 1/1. It functions in the pathway pyrimidine metabolism; UMP biosynthesis via de novo pathway; (S)-dihydroorotate from bicarbonate: step 1/3. Its function is as follows. Large subunit of the glutamine-dependent carbamoyl phosphate synthetase (CPSase). CPSase catalyzes the formation of carbamoyl phosphate from the ammonia moiety of glutamine, carbonate, and phosphate donated by ATP, constituting the first step of 2 biosynthetic pathways, one leading to arginine and/or urea and the other to pyrimidine nucleotides. The large subunit (synthetase) binds the substrates ammonia (free or transferred from glutamine from the small subunit), hydrogencarbonate and ATP and carries out an ATP-coupled ligase reaction, activating hydrogencarbonate by forming carboxy phosphate which reacts with ammonia to form carbamoyl phosphate. This is Carbamoyl phosphate synthase large chain from Sulfurisphaera tokodaii (strain DSM 16993 / JCM 10545 / NBRC 100140 / 7) (Sulfolobus tokodaii).